The primary structure comprises 259 residues: Leucine-rich repeat-containing protein 3B (259 aa).

The first 33 residues, 1–33, serve as a signal peptide directing secretion; that stretch reads MNLVDLWLTRSLSMCLLLQSFVLMILCFHSASM. An LRRNT domain is found at 34–64; it reads CPKGCLCSSSGGLNVTCSNANLKEIPRDLPP. Asn-47 is a glycosylation site (N-linked (GlcNAc...) asparagine). LRR repeat units lie at residues 65 to 86, 89 to 110, and 114 to 135; these read ETVLLYLDSNQITSIPNEIFKD, QLRVLNLSKNGIEFIDEHAFKG, and TLQTLDLSDNRIQSVHKNAFNN. N-linked (GlcNAc...) asparagine glycosylation occurs at Asn-94. In terms of domain architecture, LRRCT spans 145–197; that stretch reads NPWHCDCTLQQVLRSMASNHETAHNVICKTSVLDEHAGRPFLNAANDADLCNL. Residues 205 to 225 form a helical membrane-spanning segment; sequence AMLVTMFGWFTMVISYVVYYV.

The protein belongs to the LRRC3 family.

The protein resides in the membrane. The protein is Leucine-rich repeat-containing protein 3B (LRRC3B) of Homo sapiens (Human).